The sequence spans 1024 residues: Error-prone DNA polymerase (1024 aa).

The protein belongs to the DNA polymerase type-C family. DnaE2 subfamily.

It is found in the cytoplasm. It catalyses the reaction DNA(n) + a 2'-deoxyribonucleoside 5'-triphosphate = DNA(n+1) + diphosphate. DNA polymerase involved in damage-induced mutagenesis and translesion synthesis (TLS). It is not the major replicative DNA polymerase. This chain is Error-prone DNA polymerase, found in Vibrio campbellii (strain ATCC BAA-1116).